The chain runs to 448 residues: uncharacterized protein (448 aa).

12 helical membrane-spanning segments follow: residues 14–34 (PFIIGTIAIALFTDLFLYGII), 59–79 (TLLAVYAVANIAASSPIGFLA), 87–107 (VPMLIGLIFLTSATALLTFGN), 120–140 (GLSAAVVWTVGLALLVDVVGA), 148–168 (GGIFGFISLGEIIAPVFGGIV), 171–191 (SLGYYASFGVCFIILLLDIAL), 250–270 (IFGPFWTSFVNSCLFSAFDAT), 288–308 (LMFGVLSTPYFFCGAWAGAMV), 316–333 (IGKRAYAILGCTLFLLCI), 338–358 (TSLNIYLFSAFLAINGVVLAF), 392–412 (FSAYNIVYSLGMIIGPLVAGF), and 417–437 (FNFITSIACLSLLCFSASLMA).

It belongs to the major facilitator superfamily. TCR/Tet family.

Its subcellular location is the endoplasmic reticulum. It localises to the membrane. This is an uncharacterized protein from Schizosaccharomyces pombe (strain 972 / ATCC 24843) (Fission yeast).